Reading from the N-terminus, the 659-residue chain is DNA ligase (659 aa).

NAD(+) is bound by residues 32 to 36 (DAEYD), 81 to 82 (SL), and glutamate 110. Lysine 112 serves as the catalytic N6-AMP-lysine intermediate. Residues arginine 133, glutamate 168, lysine 284, and lysine 308 each coordinate NAD(+). Residues cysteine 402, cysteine 405, cysteine 420, and cysteine 425 each contribute to the Zn(2+) site. Positions 582-659 (AKPQIFAGKS…SEEEFAELLP (78 aa)) constitute a BRCT domain.

The protein belongs to the NAD-dependent DNA ligase family. LigA subfamily. Mg(2+) is required as a cofactor. Requires Mn(2+) as cofactor.

The enzyme catalyses NAD(+) + (deoxyribonucleotide)n-3'-hydroxyl + 5'-phospho-(deoxyribonucleotide)m = (deoxyribonucleotide)n+m + AMP + beta-nicotinamide D-nucleotide.. DNA ligase that catalyzes the formation of phosphodiester linkages between 5'-phosphoryl and 3'-hydroxyl groups in double-stranded DNA using NAD as a coenzyme and as the energy source for the reaction. It is essential for DNA replication and repair of damaged DNA. The chain is DNA ligase from Desulfitobacterium hafniense (strain DSM 10664 / DCB-2).